The following is a 145-amino-acid chain: D-aminoacyl-tRNA deacylase (145 aa).

The short motif at 137–138 (GP) is the Gly-cisPro motif, important for rejection of L-amino acids element.

Belongs to the DTD family. In terms of assembly, homodimer.

Its subcellular location is the cytoplasm. It catalyses the reaction glycyl-tRNA(Ala) + H2O = tRNA(Ala) + glycine + H(+). The enzyme catalyses a D-aminoacyl-tRNA + H2O = a tRNA + a D-alpha-amino acid + H(+). An aminoacyl-tRNA editing enzyme that deacylates mischarged D-aminoacyl-tRNAs. Also deacylates mischarged glycyl-tRNA(Ala), protecting cells against glycine mischarging by AlaRS. Acts via tRNA-based rather than protein-based catalysis; rejects L-amino acids rather than detecting D-amino acids in the active site. By recycling D-aminoacyl-tRNA to D-amino acids and free tRNA molecules, this enzyme counteracts the toxicity associated with the formation of D-aminoacyl-tRNA entities in vivo and helps enforce protein L-homochirality. The polypeptide is D-aminoacyl-tRNA deacylase (Erwinia tasmaniensis (strain DSM 17950 / CFBP 7177 / CIP 109463 / NCPPB 4357 / Et1/99)).